Reading from the N-terminus, the 419-residue chain is MSFPKVIVVSTGSELTAGRSQDTNSSWIANELFGMGFTVSKFVVLPDDPVVILEELRTLTELSMRETSILLVMTGGLGPTEDDYTLEAVCRLKGVTTEESPVARQRIETFYKLRGRNFQEAMQTAIRQVFVPKGSIILNNSVGIAPGFITSLAENVHLGCMPGVPGEMTEMFREELAPWILKTYSSREQLYSGFRFIWWMSESQFQKEFISKEKAIADGKAIWGVAAKRGYIRASFQSDSRALVDDLLRKLDTFYGTKSTPDIFEELPRMLLEKKITIGTAESCTGGLIAKTFTDVPGSSAYFYGGIISYDNSVKTGILGVKRNTLDEFGAVSRETAKEMAEGALDALGVDYSISVTGIAGPGGGTPQKKVGLVYFGIGQKNEETEIHEHYFPFPRSSFREFAAHTGIYLLYDRLKRSA.

This sequence belongs to the CinA family.

This chain is CinA-like protein, found in Leptospira borgpetersenii serovar Hardjo-bovis (strain JB197).